A 222-amino-acid chain; its full sequence is GTP cyclohydrolase 1 (222 aa).

Residues C111, H114, and C182 each contribute to the Zn(2+) site.

It belongs to the GTP cyclohydrolase I family. Toroid-shaped homodecamer, composed of two pentamers of five dimers.

It catalyses the reaction GTP + H2O = 7,8-dihydroneopterin 3'-triphosphate + formate + H(+). The protein operates within cofactor biosynthesis; 7,8-dihydroneopterin triphosphate biosynthesis; 7,8-dihydroneopterin triphosphate from GTP: step 1/1. This is GTP cyclohydrolase 1 from Klebsiella pneumoniae subsp. pneumoniae (strain ATCC 700721 / MGH 78578).